Reading from the N-terminus, the 142-residue chain is Large ribosomal subunit protein uL22c (142 aa).

This sequence belongs to the universal ribosomal protein uL22 family. As to quaternary structure, part of the 50S ribosomal subunit.

The protein localises to the plastid. It is found in the chloroplast. Its function is as follows. This protein binds specifically to 23S rRNA. In terms of biological role, the globular domain of the protein is located near the polypeptide exit tunnel on the outside of the subunit, while an extended beta-hairpin is found that lines the wall of the exit tunnel in the center of the 70S ribosome. This Pinus thunbergii (Japanese black pine) protein is Large ribosomal subunit protein uL22c (rpl22).